A 106-amino-acid chain; its full sequence is Small ribosomal subunit protein uS10 (106 aa).

The protein belongs to the universal ribosomal protein uS10 family. As to quaternary structure, part of the 30S ribosomal subunit.

In terms of biological role, involved in the binding of tRNA to the ribosomes. This chain is Small ribosomal subunit protein uS10, found in Wolbachia sp. subsp. Drosophila simulans (strain wRi).